The primary structure comprises 118 residues: Large ribosomal subunit protein uL18 (118 aa).

This sequence belongs to the universal ribosomal protein uL18 family. Part of the 50S ribosomal subunit; part of the 5S rRNA/L5/L18/L25 subcomplex. Contacts the 5S and 23S rRNAs.

Its function is as follows. This is one of the proteins that bind and probably mediate the attachment of the 5S RNA into the large ribosomal subunit, where it forms part of the central protuberance. This Ralstonia pickettii (strain 12J) protein is Large ribosomal subunit protein uL18.